Consider the following 656-residue polypeptide: Mucin-20 (656 aa).

The first 21 residues, 1-21 (MGSVWGLAVPLLVFCWKVGVS), serve as a signal peptide directing secretion. 3 stretches are compositionally biased toward polar residues: residues 85–96 (ATSISSEVNSRD), 114–125 (PAASSLEAQTTS), and 159–170 (TTSPAPSFLDTQ). 3 disordered regions span residues 85-125 (ATSI…QTTS), 159-232 (TTSP…TQTI), and 329-348 (YLSS…LSSS). Residues 171 to 227 (TTSPEPSSLTTSPAPSSLITSPTPSSLTTSPAPSFLDTQTTSPAPSSLTTSPAPSSL) are compositionally biased toward low complexity. 5 consecutive repeat copies span residues 180–188 (TTSPAPSSL), 189–197 (ITSPTPSSL), 198–206 (TTSPAPSFL), 210–218 (TTSPAPSSL), and 219–227 (TTSPAPSSL). The interval 180–227 (TTSPAPSSLITSPTPSSLTTSPAPSFLDTQTTSPAPSSLTTSPAPSSL) is approximate repeats. N-linked (GlcNAc...) asparagine glycans are attached at residues N366 and N570. The involved in oligomerization stretch occupies residues 399–603 (TAALFTSEIL…WIRKTTKHDP (205 aa)). The segment covering 560–573 (STTASTSKNPNITL) has biased composition (polar residues). Residues 560 to 592 (STTASTSKNPNITLTKTTASPKPPTHPTTSAST) form a disordered region. The segment at 604-656 (GEDGGFLLVRLTVASPKDLTEHNAREKLMNQLRRELHARMPLVHMSFLSIRRG) is interaction with MET.

In terms of assembly, interacts with MET; oligomerization increases affinity for MET. As to expression, highly expressed in kidney. Up-regulated in renal tissues during renal injury.

The protein localises to the secreted. It localises to the apical cell membrane. It is found in the basolateral cell membrane. The protein resides in the cell projection. Its subcellular location is the microvillus membrane. In terms of biological role, may regulate MET signaling cascade. Seems to decrease hepatocyte growth factor (HGF)-induced transient MAPK activation. Blocks GRB2 recruitment to MET thus suppressing the GRB2-RAS pathway. Inhibits HGF-induced proliferation of MMP1 and MMP9 expression. The chain is Mucin-20 (Muc20) from Mus musculus (Mouse).